The sequence spans 753 residues: 5-methyltetrahydropteroyltriglutamate--homocysteine methyltransferase (753 aa).

Residues 17-20 and lysine 117 contribute to the 5-methyltetrahydropteroyltri-L-glutamate site; that span reads RELK. L-homocysteine-binding positions include 431 to 433 and glutamate 484; that span reads IGS. Residues 431 to 433 and glutamate 484 contribute to the L-methionine site; that span reads IGS. 5-methyltetrahydropteroyltri-L-glutamate is bound by residues 515–516 and tryptophan 561; that span reads RC. Position 599 (aspartate 599) interacts with L-homocysteine. L-methionine is bound at residue aspartate 599. Glutamate 605 contacts 5-methyltetrahydropteroyltri-L-glutamate. The Zn(2+) site is built by histidine 641, cysteine 643, and glutamate 665. Histidine 694 functions as the Proton donor in the catalytic mechanism. Residue cysteine 726 coordinates Zn(2+).

It belongs to the vitamin-B12 independent methionine synthase family. Zn(2+) is required as a cofactor.

It carries out the reaction 5-methyltetrahydropteroyltri-L-glutamate + L-homocysteine = tetrahydropteroyltri-L-glutamate + L-methionine. It functions in the pathway amino-acid biosynthesis; L-methionine biosynthesis via de novo pathway; L-methionine from L-homocysteine (MetE route): step 1/1. Catalyzes the transfer of a methyl group from 5-methyltetrahydrofolate to homocysteine resulting in methionine formation. The chain is 5-methyltetrahydropteroyltriglutamate--homocysteine methyltransferase from Escherichia coli O139:H28 (strain E24377A / ETEC).